A 147-amino-acid polypeptide reads, in one-letter code: Hemoglobin subunit epsilon (147 aa).

In terms of domain architecture, Globin spans 3-147 (HFTAEEKSTI…VATALAHKYH (145 aa)). A phosphoserine mark is found at serine 14 and serine 51. Heme b is bound by residues histidine 64 and histidine 93.

Belongs to the globin family. As to quaternary structure, heterotetramer of two alpha chains and two epsilon chains in early embryonic hemoglobin Gower-2; two zeta chains and two epsilon chains in early embryonic hemoglobin Gower-1. Red blood cells.

The epsilon chain is a beta-type chain of early mammalian embryonic hemoglobin. In Eulemur fulvus fulvus (Brown lemur), this protein is Hemoglobin subunit epsilon (HBE1).